Reading from the N-terminus, the 658-residue chain is Methionine--tRNA ligase (658 aa).

Positions 9–19 (PYANGKAHVGH) match the 'HIGH' region motif. Cys-140, Cys-143, Cys-152, and Cys-156 together coordinate Zn(2+). The short motif at 322–326 (TFSKS) is the 'KMSKS' region element. Lys-325 serves as a coordination point for ATP. Residues 558-658 (DFQKLDIRIG…KEVEPGTRVC (101 aa)) enclose the tRNA-binding domain.

The protein belongs to the class-I aminoacyl-tRNA synthetase family. MetG type 1 subfamily. As to quaternary structure, homodimer. Zn(2+) serves as cofactor.

The protein localises to the cytoplasm. It catalyses the reaction tRNA(Met) + L-methionine + ATP = L-methionyl-tRNA(Met) + AMP + diphosphate. In terms of biological role, is required not only for elongation of protein synthesis but also for the initiation of all mRNA translation through initiator tRNA(fMet) aminoacylation. In Archaeoglobus fulgidus (strain ATCC 49558 / DSM 4304 / JCM 9628 / NBRC 100126 / VC-16), this protein is Methionine--tRNA ligase.